Here is a 251-residue protein sequence, read N- to C-terminus: uncharacterized protein (251 aa).

Residue 14–37 (VLGGTSAIGLATARRLIARGARLV) participates in NADP(+) binding. A substrate-binding site is contributed by Ser-145. Catalysis depends on Tyr-158, which acts as the Proton acceptor.

This sequence belongs to the short-chain dehydrogenases/reductases (SDR) family.

In terms of biological role, may be involved in the biosynthesis of a heptaene-type antibiotic. This is an uncharacterized protein from Streptomyces coelicolor.